A 318-amino-acid chain; its full sequence is uncharacterized protein (318 aa).

The helical transmembrane segment at 2 to 22 threads the bilayer; sequence ILELIIVLVLLVLAFKSLKIL. A disordered region spans residues 295 to 318; it reads SDPEDKGVSEVETESQPAEKPEKH.

The protein belongs to the band 7/mec-2 family.

It is found in the membrane. This is an uncharacterized protein from Methanothermobacter thermautotrophicus (strain ATCC 29096 / DSM 1053 / JCM 10044 / NBRC 100330 / Delta H) (Methanobacterium thermoautotrophicum).